The following is a 313-amino-acid chain: Solute carrier family 35 member E3 (313 aa).

10 consecutive transmembrane segments (helical) span residues 17 to 37 (GLLLNLLVSICIVFLNKWIYV), 40 to 60 (GFPNMSLTLVHFVVTWLGLYV), 77 to 97 (LLLLALSFCGFVVFTNLSLQN), 100 to 120 (IGTYQLAKAMTTPVIIVIQTL), 130 to 147 (IRLTLIPITLGVILNSYY), 153 to 173 (FLGTVFAALGVLVTSLYQVWV), 187 to 206 (LLYYQAPMSSAMLLVAVPFF), 225 to 245 (LMVLLSGVIAFMVNLSIYWII), 252 to 272 (TYNMFGHFKFCITLFGGYVLF), and 275 to 295 (PLSINQGLGMLCTLFGILAYT).

The protein belongs to the TPT transporter family. SLC35E subfamily.

It localises to the membrane. Functionally, putative transporter. This chain is Solute carrier family 35 member E3 (SLC35E3), found in Bos taurus (Bovine).